Reading from the N-terminus, the 211-residue chain is Large ribosomal subunit protein uL3 (211 aa).

Q150 is subject to N5-methylglutamine.

It belongs to the universal ribosomal protein uL3 family. As to quaternary structure, part of the 50S ribosomal subunit. Forms a cluster with proteins L14 and L19. Methylated by PrmB.

One of the primary rRNA binding proteins, it binds directly near the 3'-end of the 23S rRNA, where it nucleates assembly of the 50S subunit. The polypeptide is Large ribosomal subunit protein uL3 (Pseudomonas fluorescens (strain ATCC BAA-477 / NRRL B-23932 / Pf-5)).